Here is a 264-residue protein sequence, read N- to C-terminus: 3-methyl-2-oxobutanoate hydroxymethyltransferase (264 aa).

Mg(2+)-binding residues include aspartate 45 and aspartate 84. Residues 45–46 (DS), aspartate 84, and lysine 112 contribute to the 3-methyl-2-oxobutanoate site. Residue glutamate 114 coordinates Mg(2+). Glutamate 181 functions as the Proton acceptor in the catalytic mechanism.

This sequence belongs to the PanB family. Homodecamer; pentamer of dimers. Requires Mg(2+) as cofactor.

The protein localises to the cytoplasm. It carries out the reaction 3-methyl-2-oxobutanoate + (6R)-5,10-methylene-5,6,7,8-tetrahydrofolate + H2O = 2-dehydropantoate + (6S)-5,6,7,8-tetrahydrofolate. It functions in the pathway cofactor biosynthesis; (R)-pantothenate biosynthesis; (R)-pantoate from 3-methyl-2-oxobutanoate: step 1/2. Functionally, catalyzes the reversible reaction in which hydroxymethyl group from 5,10-methylenetetrahydrofolate is transferred onto alpha-ketoisovalerate to form ketopantoate. The sequence is that of 3-methyl-2-oxobutanoate hydroxymethyltransferase from Escherichia coli O8 (strain IAI1).